The chain runs to 223 residues: MDSDSWSDRLASATRRYQLAFPSRSDTFLGFEEIDGEEEFREEFACPFCSDYFDIVSLCCHIDEDHPMEAKNGVCPVCAVRVGVDMVAHITLQHANIFKMHRKRKPRRGGSYSTLSILRREFPDGNFQSLFGGSSCIVSSSSSSNVAADPLLSSFISPIADGFFTTESCISAETGPVKKTTIQCLPEQNAKKTSLSAEDHKQKLKRSEFVRELLSSTILDDSL.

Thr-114 is subject to Phosphothreonine. Phosphoserine is present on Ser-116.

This sequence belongs to the Di19 family. Post-translationally, phosphorylated in vitro by CPK3 or CPK11. As to expression, expressed in seedlings, roots, leaves, stems, flowers and siliques.

It is found in the nucleus. The sequence is that of Protein DEHYDRATION-INDUCED 19 homolog 3 (DI19-3) from Arabidopsis thaliana (Mouse-ear cress).